The sequence spans 158 residues: Transcription elongation factor GreA (158 aa).

Residues 4-70 (QKQYPMTQEG…IEQDIQRIEH (67 aa)) are a coiled coil.

The protein belongs to the GreA/GreB family.

Functionally, necessary for efficient RNA polymerase transcription elongation past template-encoded arresting sites. The arresting sites in DNA have the property of trapping a certain fraction of elongating RNA polymerases that pass through, resulting in locked ternary complexes. Cleavage of the nascent transcript by cleavage factors such as GreA or GreB allows the resumption of elongation from the new 3'terminus. GreA releases sequences of 2 to 3 nucleotides. The sequence is that of Transcription elongation factor GreA from Staphylococcus aureus (strain Mu3 / ATCC 700698).